A 517-amino-acid chain; its full sequence is Ubiquitin carboxyl-terminal hydrolase 30 (517 aa).

Residues 1-35 are Mitochondrial intermembrane-facing; that stretch reads MLSSRAQAARTAADKALQRFLRTGAAVRYKVMKNW. A helical membrane pass occupies residues 36–56; sequence GVIGGIAAALAAGIYVIWGPI. The Cytoplasmic portion of the chain corresponds to 57–517; that stretch reads TERKKRRKGL…QQGREYRSEE (461 aa). A USP domain is found at 68–502; that stretch reads PGLVNLGNTC…SAYLLFYERV (435 aa). C77 acts as the Nucleophile in catalysis. The interval 198–221 is disordered; it reads MAPRQVTCHTRGSPHPTTNHWKSQ. A compositionally biased stretch (polar residues) spans 204-218; sequence TCHTRGSPHPTTNHW. Residues K235 and K289 each participate in a glycyl lysine isopeptide (Lys-Gly) (interchain with G-Cter in ubiquitin) cross-link. Residues 364–395 are disordered; it reads SQHGPKATENPGSAPEVQDAQAAPKPGLSQPG. The active-site Proton acceptor is H452.

Belongs to the peptidase C19 family. In terms of processing, ubiquitinated by parkin (PRKN) at Lys-235 and Lys-289, leading to its degradation.

It is found in the mitochondrion outer membrane. The enzyme catalyses Thiol-dependent hydrolysis of ester, thioester, amide, peptide and isopeptide bonds formed by the C-terminal Gly of ubiquitin (a 76-residue protein attached to proteins as an intracellular targeting signal).. Its activity is regulated as follows. Inhibited by the diterpenoid derivative 15-oxospiramilactone (S3). Functionally, deubiquitinating enzyme tethered to the mitochondrial outer membrane that acts as a key inhibitor of mitophagy by counteracting the action of parkin (PRKN): hydrolyzes ubiquitin attached by parkin on target proteins, such as RHOT1/MIRO1 and TOMM20, thereby blocking parkin's ability to drive mitophagy. Preferentially cleaves 'Lys-6'- and 'Lys-11'-linked polyubiquitin chains, 2 types of linkage that participate in mitophagic signaling. Does not cleave efficiently polyubiquitin phosphorylated at 'Ser-65'. Acts as negative regulator of mitochondrial fusion by mediating deubiquitination of MFN1 and MFN2. The protein is Ubiquitin carboxyl-terminal hydrolase 30 (Usp30) of Mus musculus (Mouse).